The sequence spans 213 residues: Octanoyltransferase (213 aa).

In terms of domain architecture, BPL/LPL catalytic spans 32-207 (ENSHDEIWLV…NILALLNNPP (176 aa)). Substrate contacts are provided by residues 71-78 (RGGQVTYH), 138-140 (SLG), and 151-153 (GLA). The active-site Acyl-thioester intermediate is the cysteine 169.

It belongs to the LipB family.

The protein resides in the cytoplasm. The enzyme catalyses octanoyl-[ACP] + L-lysyl-[protein] = N(6)-octanoyl-L-lysyl-[protein] + holo-[ACP] + H(+). Its pathway is protein modification; protein lipoylation via endogenous pathway; protein N(6)-(lipoyl)lysine from octanoyl-[acyl-carrier-protein]: step 1/2. In terms of biological role, catalyzes the transfer of endogenously produced octanoic acid from octanoyl-acyl-carrier-protein onto the lipoyl domains of lipoate-dependent enzymes. Lipoyl-ACP can also act as a substrate although octanoyl-ACP is likely to be the physiological substrate. The polypeptide is Octanoyltransferase (Salmonella typhi).